Here is a 206-residue protein sequence, read N- to C-terminus: MAKVDLFNQNGEKVGDLQLADSVFGVEVNTYAMHQVVKALLANKRQGTQSAKTRAEVSGGGIKPWRQKGTGRARQGSIRAPQWIHGGIVFAPKPRDYRMSIPKSMKKVAIKSALTSKVNENLMVVVDEIKLETPKTKEVVKMLNAFNAKKTLIITNNAEENVYKSARNIEGVQIIPVNNINVYDVLKYDKVIITKDAVSKIEEVYA.

Positions 48–75 (TQSAKTRAEVSGGGIKPWRQKGTGRARQ) are disordered.

This sequence belongs to the universal ribosomal protein uL4 family. Part of the 50S ribosomal subunit.

Its function is as follows. One of the primary rRNA binding proteins, this protein initially binds near the 5'-end of the 23S rRNA. It is important during the early stages of 50S assembly. It makes multiple contacts with different domains of the 23S rRNA in the assembled 50S subunit and ribosome. In terms of biological role, forms part of the polypeptide exit tunnel. The protein is Large ribosomal subunit protein uL4 of Clostridium botulinum (strain Loch Maree / Type A3).